The chain runs to 420 residues: Sodium-dependent phosphate transport protein 4 (420 aa).

The disordered stretch occupies residues 1-21; it reads MATKTELSPTARESKNAQDMQ. N-linked (GlcNAc...) asparagine glycosylation is found at asparagine 49, asparagine 60, asparagine 68, and asparagine 77. Transmembrane regions (helical) follow at residues 126–146, 154–174, 218–238, 256–276, 292–314, 319–341, 357–377, and 385–405; these read SIALSGMLLGCFTAILIGGFI, FVFYIFGGVGCVCCLLWFVVI, IWSICLGCFSHQWLVSTMVVY, LLSALPFIVAWVIGMVGGYLA, IATILGSLPSSALIVSLPYLNSG, TALLTLSCGLSTLCQSGIYINVL, GFSSIAPVIVPTVSGFLLSQD, and VFFLLFAVNLLGLLFYLIFGE.

The protein belongs to the major facilitator superfamily. Sodium/anion cotransporter family. As to expression, expressed in the liver and kidney. It is detected in proximal tubules in renal cortex as well as some tubules and glomeruli, with highest expression at the apical side of proximal tubules (at protein level).

Its subcellular location is the endoplasmic reticulum membrane. The protein localises to the cell membrane. The enzyme catalyses urate(in) + Na(+)(out) = urate(out) + Na(+)(in). Transports organic anions in a voltage-driven, multispecific, manner, on the apical side of renal proximal tubule. In particular, participates in the secretion of urate from the cell into the lumen. Urate is the end product of purine metabolism. May have roles in the metabolism and secretion of estrone sulfate, estradiol-17-beta-glucuronide, ochratoxin A, as wells as drugs such as bumetanide. The protein is Sodium-dependent phosphate transport protein 4 (SLC17A3) of Homo sapiens (Human).